The chain runs to 145 residues: MHPAHLLVLLAVCVSLLGASDIPPLPLNLLQFGFMIECAIRNRQPALDFMNYGCYCGTVGHGTPVDDLDRCCKTRNECYAEAEKHGCYPSLTTYRWQCGRVGLHCNSKTQCEVFVCACDLAAAKCLAQEDYNPAHFNINTKARCR.

Residues 1 to 27 (MHPAHLLVLLAVCVSLLGASDIPPLPL) form the signal peptide. 7 cysteine pairs are disulfide-bonded: Cys38–Cys98, Cys54–Cys144, Cys56–Cys72, Cys71–Cys125, Cys78–Cys118, Cys87–Cys111, and Cys105–Cys116.

It belongs to the phospholipase A2 family. Group I subfamily. N49 sub-subfamily. In terms of assembly, heterotrimer of alpha, beta, and gamma chains; non-covalently linked. Expressed by the venom gland.

The protein localises to the secreted. In terms of biological role, heterotrimer: Snake venom phospholipase A2 (PLA2) heterotrimer that acts as a potent presynaptic neurotoxin by blocking synaptic transmission and synaptic vesicle recycling. May act by binding in a calcium-dependent fashion to neurotonal pentraxin-1 (NPTX1) and neurotonal pentraxin-2 (NPTX2), but not to neuronal pentraxin receptor (NPTXR). Also binds to taipoxin-associated calcium binding protein 49 (RCN2), a protein localized in the lumen of endoplasmic reticulum. Its function is as follows. Monomer (beta chain): Snake venom phospholipase A2 homolog that is neither toxic nor enzymatically active. Does not bind calcium. The protein is Neutral phospholipase A2 paradoxin-like beta chain of Oxyuranus microlepidotus (Inland taipan).